We begin with the raw amino-acid sequence, 251 residues long: E3 ubiquitin-protein ligase Os06g0535400 (251 aa).

3 consecutive transmembrane segments (helical) span residues 28–48, 102–122, and 127–147; these read VVAATFTGSFSLQIFLFYCFA, LANRCFAVVFMVFVPLVIVVF, and ADVVAYALCLANILVMVVWLS. Residues 185–227 form an RING-type; atypical zinc finger; the sequence is CCVCLAGMREAQALRDLPRCGHRFHAKCIGKWLTAHPTCPVCR.

The protein localises to the membrane. It carries out the reaction S-ubiquitinyl-[E2 ubiquitin-conjugating enzyme]-L-cysteine + [acceptor protein]-L-lysine = [E2 ubiquitin-conjugating enzyme]-L-cysteine + N(6)-ubiquitinyl-[acceptor protein]-L-lysine.. It participates in protein modification; protein ubiquitination. Its function is as follows. Possesses E3 ubiquitin-protein ligase in vitro. The sequence is that of E3 ubiquitin-protein ligase Os06g0535400 from Oryza sativa subsp. japonica (Rice).